Consider the following 615-residue polypeptide: Protein translocase subunit SecD (615 aa).

Transmembrane regions (helical) follow at residues 10 to 30 (YVMLIVVIVIGLLYALPNLFG), 452 to 472 (QGLEACLAGLLVSILFMIIFY), 477 to 497 (LIATSALIANLILIVGIMSLL), 504 to 524 (MPGIAGIVLTLAVAVDANVLI), 548 to 570 (GAFSSIFDANITTLIKVIILYAV), and 585 to 605 (GVATSMFTAIVGTRAIVNLLY).

This sequence belongs to the SecD/SecF family. SecD subfamily. Forms a complex with SecF. Part of the essential Sec protein translocation apparatus which comprises SecA, SecYEG and auxiliary proteins SecDF-YajC and YidC.

It is found in the cell inner membrane. In terms of biological role, part of the Sec protein translocase complex. Interacts with the SecYEG preprotein conducting channel. SecDF uses the proton motive force (PMF) to complete protein translocation after the ATP-dependent function of SecA. The chain is Protein translocase subunit SecD from Shigella flexneri.